The sequence spans 425 residues: Histone-binding protein RBBP7 (425 aa).

7 WD repeats span residues 47–122, 128–173, 181–217, 228–269, 275–312, 318–369, and 376–403; these read QWLP…KINH, RARY…LRLR, GLSW…KVVD, VVED…HSVD, VNCL…LHSF, EIFQ…LFIH, and ISDF…IWQM.

It belongs to the WD repeat RBAP46/RBAP48/MSI1 family. As to quaternary structure, binds directly to helix 1 of the histone fold of histone H4, a region that is not accessible when H4 is in chromatin.

It is found in the nucleus. Functionally, core histone-binding subunit that may target chromatin remodeling factors, histone acetyltransferases and histone deacetylases to their histone substrates in a manner that is regulated by nucleosomal DNA. Component of several complexes which regulate chromatin metabolism. The protein is Histone-binding protein RBBP7 (rbbp7) of Xenopus tropicalis (Western clawed frog).